A 160-amino-acid polypeptide reads, in one-letter code: Major strawberry allergen Fra a 1.05 (160 aa).

This sequence belongs to the BetVI family. In terms of processing, phosphorylated in vivo. Phosphorylation prevents its activity as ribonuclease.

Possesses ribonuclease activity in vitro. In Fragaria ananassa (Strawberry), this protein is Major strawberry allergen Fra a 1.05.